A 990-amino-acid chain; its full sequence is Putative ariadne-like RING finger protein R811 (990 aa).

The 194-residue stretch at 8 to 201 (DLAIVVDATG…IITQTTIKLL (194 aa)) folds into the VWFA domain. The interval 797-990 (EKGLCMICFN…GGAFEYDQDD (194 aa)) is TRIAD supradomain. Zn(2+) contacts are provided by Cys-801, Cys-804, Cys-827, and Cys-830. The RING-type 1 zinc-finger motif lies at 801-854 (CMICFNEFSKSNLRQICGRKVCQSVACYDCMKSWYGENKVGDLIHVNALTCPFC). The IBR-type zinc-finger motif lies at 855 to 903 (KQCPMFNILAAFNRQVCAMVRTNNSFDIDWWYGWCLKCFQPKKVVEKEC). Cys-930 and Cys-935 together coordinate Zn(2+). Residues 930 to 961 (CPNSLCKIPIIKDGGCNHMECTACKKHFCWLC) form an RING-type 2; atypical zinc finger. The active site involves Cys-945. Zn(2+) is bound by residues Cys-950 and Cys-953.

The protein is Putative ariadne-like RING finger protein R811 of Acanthamoeba polyphaga (Amoeba).